Here is a 249-residue protein sequence, read N- to C-terminus: 5'-nucleotidase SurE (249 aa).

Residues Asp9, Asp10, Ser40, and Asn92 each contribute to the a divalent metal cation site.

This sequence belongs to the SurE nucleotidase family. A divalent metal cation serves as cofactor.

It localises to the cytoplasm. It carries out the reaction a ribonucleoside 5'-phosphate + H2O = a ribonucleoside + phosphate. Nucleotidase that shows phosphatase activity on nucleoside 5'-monophosphates. The polypeptide is 5'-nucleotidase SurE (Shewanella putrefaciens (strain CN-32 / ATCC BAA-453)).